Here is a 328-residue protein sequence, read N- to C-terminus: MTHSLRVIFAGTPEFAAAALAAIHEAGFPVPLVLTQPDRPAGRGMKLQASAVKRYALEHGITVAQPPSLRRAGKHPAEAAAALDLLHATPHDVMVVAAYGLLLPQEVLDLPRYGCINIHASLLPRWRGAAPIHRAIEAGDAETGVTLMQMDAGLDTGAMLHDARVAIAPDDTTATLHDKLAAAGATLIVDALVELERAGALAATPQPDDGITYAEKIGKHEAALDWRKPATVLARQVRAFDPFPGGAGTLDGVTLKLWAADAMPARGDAAPGTIVDAGADGVVIACGEGALRVTQLQKPGGKRLPAREFLAGAPLAVGQRFSPPDTAA.

Residue 121–124 (SLLP) participates in (6S)-5,6,7,8-tetrahydrofolate binding.

It belongs to the Fmt family.

The catalysed reaction is L-methionyl-tRNA(fMet) + (6R)-10-formyltetrahydrofolate = N-formyl-L-methionyl-tRNA(fMet) + (6S)-5,6,7,8-tetrahydrofolate + H(+). Functionally, attaches a formyl group to the free amino group of methionyl-tRNA(fMet). The formyl group appears to play a dual role in the initiator identity of N-formylmethionyl-tRNA by promoting its recognition by IF2 and preventing the misappropriation of this tRNA by the elongation apparatus. This Burkholderia thailandensis (strain ATCC 700388 / DSM 13276 / CCUG 48851 / CIP 106301 / E264) protein is Methionyl-tRNA formyltransferase.